The chain runs to 377 residues: TelA-like protein SSP1345 (377 aa).

Residues M1–D18 are compositionally biased toward basic and acidic residues. The tract at residues M1 to Q39 is disordered. Over residues N20–F34 the composition is skewed to polar residues.

The protein belongs to the TelA family.

The protein is TelA-like protein SSP1345 of Staphylococcus saprophyticus subsp. saprophyticus (strain ATCC 15305 / DSM 20229 / NCIMB 8711 / NCTC 7292 / S-41).